The chain runs to 640 residues: 1,4-alpha-glucan branching enzyme GlgB (640 aa).

Asp317 (nucleophile) is an active-site residue. The active-site Proton donor is Glu370.

Belongs to the glycosyl hydrolase 13 family. GlgB subfamily. In terms of assembly, monomer.

It catalyses the reaction Transfers a segment of a (1-&gt;4)-alpha-D-glucan chain to a primary hydroxy group in a similar glucan chain.. Its pathway is glycan biosynthesis; glycogen biosynthesis. Catalyzes the formation of the alpha-1,6-glucosidic linkages in glycogen by scission of a 1,4-alpha-linked oligosaccharide from growing alpha-1,4-glucan chains and the subsequent attachment of the oligosaccharide to the alpha-1,6 position. This is 1,4-alpha-glucan branching enzyme GlgB from Nitratidesulfovibrio vulgaris (strain ATCC 29579 / DSM 644 / CCUG 34227 / NCIMB 8303 / VKM B-1760 / Hildenborough) (Desulfovibrio vulgaris).